A 43-amino-acid polypeptide reads, in one-letter code: MTKNINQPVAYPIFTFRWLAIHGLAIPTVFFLGGITAMQFIQR.

A helical membrane pass occupies residues 18-34 (WLAIHGLAIPTVFFLGG). His-22 contributes to the heme binding site.

The protein belongs to the PsbE/PsbF family. As to quaternary structure, heterodimer of an alpha subunit and a beta subunit. PSII is composed of 1 copy each of membrane proteins PsbA, PsbB, PsbC, PsbD, PsbE, PsbF, PsbH, PsbI, PsbJ, PsbK, PsbL, PsbM, PsbT, PsbX, PsbY, PsbZ, Psb30/Ycf12, at least 3 peripheral proteins of the oxygen-evolving complex and a large number of cofactors. It forms dimeric complexes. Heme b serves as cofactor.

Its subcellular location is the plastid. The protein resides in the chloroplast thylakoid membrane. Its function is as follows. This b-type cytochrome is tightly associated with the reaction center of photosystem II (PSII). PSII is a light-driven water:plastoquinone oxidoreductase that uses light energy to abstract electrons from H(2)O, generating O(2) and a proton gradient subsequently used for ATP formation. It consists of a core antenna complex that captures photons, and an electron transfer chain that converts photonic excitation into a charge separation. In Trieres chinensis (Marine centric diatom), this protein is Cytochrome b559 subunit beta.